The primary structure comprises 257 residues: 5'-nucleotidase SurE (257 aa).

Residues D8, D9, S40, and N92 each coordinate a divalent metal cation.

It belongs to the SurE nucleotidase family. A divalent metal cation is required as a cofactor.

It localises to the cytoplasm. It carries out the reaction a ribonucleoside 5'-phosphate + H2O = a ribonucleoside + phosphate. In terms of biological role, nucleotidase that shows phosphatase activity on nucleoside 5'-monophosphates. The chain is 5'-nucleotidase SurE from Rhizobium leguminosarum bv. trifolii (strain WSM2304).